The primary structure comprises 346 residues: MMCSNNISDYKLLEILKNGMIGTVYKAEDINNKCLAVKKVSMDQPMEKLTLLFNEVLTVRRLQHRNINTIVSCFLYKQYVYLTYKFMCFGNCEVLLKNVYTSGFPEVAIALILKDVLSALTYIHSEHYVHGSVRAKHILLSPRKAVLSNFSYCQSFISQGEKKTFIFGSTVGIEKELYWTAPEVLYQNLSGYTEKIDIYSIGITCCEMANGFQPFKDTELTYMYIEKVRGSLQVLLDKNSLLENQGSLSLEHTNKRIARDVIVNKSFSENFHQFVELCLNKNPLSRWAASKLMTHSFLKQCRNTSLLDQLKDLGQKMSKFKRNEHEIFSDARGSHNPQPNDTIWKF.

Residues 10–298 enclose the Protein kinase domain; it reads YKLLEILKNG…ASKLMTHSFL (289 aa). Residues 16–24 and K38 contribute to the ATP site; that span reads LKNGMIGTV.

This sequence belongs to the protein kinase superfamily. STE Ser/Thr protein kinase family. STE20 subfamily.

The polypeptide is STE20-related kinase adapter protein stlk (Drosophila melanogaster (Fruit fly)).